Here is a 253-residue protein sequence, read N- to C-terminus: MHILLSNDDGIHAPGIQQLAEALRTLAFVQIVAPDRDRSGVSNSLTLDAPLRMQTHPNGDIAILSGTPTDCVYLGVNALMRPGPDIVVSGINAGPNLGDDVIYSGTVAAAMEGRHLGYPALAVSLNGTRHFATAAAVTCRLLRALTSTPLRTGKILNVNVPDLPLSSLKGYKVTRCGSRHPASEVIRQTDPRGREMLWIGPPAGSFDAGADTDFDAVNRGYVSLTPLQVDLTASAALPVLSDWLGDTEGLGSW.

Asp8, Asp9, Ser39, and Asn92 together coordinate a divalent metal cation.

Belongs to the SurE nucleotidase family. The cofactor is a divalent metal cation.

Its subcellular location is the cytoplasm. The enzyme catalyses a ribonucleoside 5'-phosphate + H2O = a ribonucleoside + phosphate. It carries out the reaction a ribonucleoside 3'-phosphate + H2O = a ribonucleoside + phosphate. It catalyses the reaction [phosphate](n) + H2O = [phosphate](n-1) + phosphate + H(+). Its function is as follows. Nucleotidase with a broad substrate specificity as it can dephosphorylate various ribo- and deoxyribonucleoside 5'-monophosphates and ribonucleoside 3'-monophosphates with highest affinity to 3'-AMP. Also hydrolyzes polyphosphate (exopolyphosphatase activity) with the preference for short-chain-length substrates (P20-25). Might be involved in the regulation of dNTP and NTP pools, and in the turnover of 3'-mononucleotides produced by numerous intracellular RNases (T1, T2, and F) during the degradation of various RNAs. This chain is 5'/3'-nucleotidase SurE, found in Sodalis glossinidius (strain morsitans).